Consider the following 146-residue polypeptide: Large-conductance mechanosensitive channel (146 aa).

3 consecutive transmembrane segments (helical) span residues 21 to 41 (VGII…ADLI), 44 to 64 (IIGL…LGDG), and 83 to 103 (GSFI…FLLV).

Belongs to the MscL family. As to quaternary structure, homopentamer.

It localises to the cell inner membrane. In terms of biological role, channel that opens in response to stretch forces in the membrane lipid bilayer. May participate in the regulation of osmotic pressure changes within the cell. This Cereibacter sphaeroides (strain ATCC 17023 / DSM 158 / JCM 6121 / CCUG 31486 / LMG 2827 / NBRC 12203 / NCIMB 8253 / ATH 2.4.1.) (Rhodobacter sphaeroides) protein is Large-conductance mechanosensitive channel.